The chain runs to 98 residues: NADH-ubiquinone oxidoreductase chain 4L (98 aa).

Helical transmembrane passes span 1–21 (MSLV…GLLM), 25–45 (HLMS…ILST), and 67–87 (AACE…TYGV).

Belongs to the complex I subunit 4L family. Core subunit of respiratory chain NADH dehydrogenase (Complex I) which is composed of 45 different subunits.

The protein resides in the mitochondrion inner membrane. It carries out the reaction a ubiquinone + NADH + 5 H(+)(in) = a ubiquinol + NAD(+) + 4 H(+)(out). In terms of biological role, core subunit of the mitochondrial membrane respiratory chain NADH dehydrogenase (Complex I) which catalyzes electron transfer from NADH through the respiratory chain, using ubiquinone as an electron acceptor. Part of the enzyme membrane arm which is embedded in the lipid bilayer and involved in proton translocation. The chain is NADH-ubiquinone oxidoreductase chain 4L (MT-ND4L) from Talpa europaea (European mole).